The following is a 906-amino-acid chain: Protein translocase subunit SecA (906 aa).

ATP-binding positions include Q89, 107-111 (GEGKT), and D502. Residues C890, C892, C901, and H902 each coordinate Zn(2+).

The protein belongs to the SecA family. As to quaternary structure, monomer and homodimer. Part of the essential Sec protein translocation apparatus which comprises SecA, SecYEG and auxiliary proteins SecDF-YajC and YidC. The cofactor is Zn(2+).

Its subcellular location is the cell inner membrane. The protein localises to the cytoplasm. The catalysed reaction is ATP + H2O + cellular proteinSide 1 = ADP + phosphate + cellular proteinSide 2.. Its function is as follows. Part of the Sec protein translocase complex. Interacts with the SecYEG preprotein conducting channel. Has a central role in coupling the hydrolysis of ATP to the transfer of proteins into and across the cell membrane, serving both as a receptor for the preprotein-SecB complex and as an ATP-driven molecular motor driving the stepwise translocation of polypeptide chains across the membrane. The polypeptide is Protein translocase subunit SecA (Bartonella quintana (strain Toulouse) (Rochalimaea quintana)).